The primary structure comprises 610 residues: MTKNVLVSVAWPYANGPRHIGHVAGFGVPSDVFARFQRMSGNNVLMVSGTDEHGTPLLVQADKEGVTVQDLADKYNRQIVEDLTGLGLSYDLFTRTTTSNHYAVVQELFRGLYDNGYMIKETTLGAISPSTGRTLPDRYIEGTCPICGTDGARGDQCDNCGNQLDPADLINPVSKINGETPEFVETEHFLLDLPALAEALTEWLKGREDWRPNVLKFSLNLLDDIRPRAMSRDIDWGIPIPVEGWQDNNAKKLYVWFDAVVGYLSASIEWAYRSGDPEAWRTFWNDPETKSYYFMGKDNITFHSQIWPAELLGYAGKGSRGGEIGDLGVLNLPTEVVSSEFLTMSGSKFSSSKGVVIYVKDFLKEFGPDALRYFIAVAGPENNDTDFTWDEFVRRVNNELANGWGNLVNRTVSMAHKNFGEVPVPGALEESDKKILDLATAAFESVAANLDQSKFKAGISEIMHVVGEANAYIAEQEPWKLAKDDTKRERLATVLWTALQVVSDCNTMLTPYLPHTAQKVHETLGRDGIWAASPQIVEVTNESPRQPIGVGLPDPEHTYPVIMGDYKTQLAKWQRIDVVPGTTLEKPAPLIAKLDPELGETGPEWAPVQN.

Residues Pro-12–His-22 carry the 'HIGH' region motif. Zn(2+) contacts are provided by Cys-144, Cys-147, Cys-157, and Cys-160. Residues Lys-348–Ser-352 carry the 'KMSKS' region motif. An ATP-binding site is contributed by Ser-351.

Belongs to the class-I aminoacyl-tRNA synthetase family. MetG type 1 subfamily. As to quaternary structure, monomer. Zn(2+) serves as cofactor.

It localises to the cytoplasm. The catalysed reaction is tRNA(Met) + L-methionine + ATP = L-methionyl-tRNA(Met) + AMP + diphosphate. In terms of biological role, is required not only for elongation of protein synthesis but also for the initiation of all mRNA translation through initiator tRNA(fMet) aminoacylation. This chain is Methionine--tRNA ligase, found in Corynebacterium glutamicum (strain R).